The sequence spans 138 residues: MLQPSRRKYRKEQKGRNTGLATRGAQVSFGEFGLKATGRGRLTARQIEAARRAINRHIKRGGRIWIRIFPDKPISQKPAEVRMGNGKGNPEYWVAEIQPGKVLYEMEGVSEELAREAFRLAAAKLPISTTFVARHIGA.

Over residues 1–13 the composition is skewed to basic residues; the sequence is MLQPSRRKYRKEQ. Residues 1–20 form a disordered region; sequence MLQPSRRKYRKEQKGRNTGL.

This sequence belongs to the universal ribosomal protein uL16 family. Part of the 50S ribosomal subunit.

Binds 23S rRNA and is also seen to make contacts with the A and possibly P site tRNAs. This Bordetella avium (strain 197N) protein is Large ribosomal subunit protein uL16.